The chain runs to 312 residues: Acetyl-coenzyme A carboxylase carboxyl transferase subunit alpha (312 aa).

In terms of domain architecture, CoA carboxyltransferase C-terminal spans 36-286; sequence NLEKEISKTY…ADYVKKSLNE (251 aa).

Belongs to the AccA family. Acetyl-CoA carboxylase is a heterohexamer composed of biotin carboxyl carrier protein (AccB), biotin carboxylase (AccC) and two subunits each of ACCase subunit alpha (AccA) and ACCase subunit beta (AccD).

The protein resides in the cytoplasm. The enzyme catalyses N(6)-carboxybiotinyl-L-lysyl-[protein] + acetyl-CoA = N(6)-biotinyl-L-lysyl-[protein] + malonyl-CoA. It functions in the pathway lipid metabolism; malonyl-CoA biosynthesis; malonyl-CoA from acetyl-CoA: step 1/1. Functionally, component of the acetyl coenzyme A carboxylase (ACC) complex. First, biotin carboxylase catalyzes the carboxylation of biotin on its carrier protein (BCCP) and then the CO(2) group is transferred by the carboxyltransferase to acetyl-CoA to form malonyl-CoA. The sequence is that of Acetyl-coenzyme A carboxylase carboxyl transferase subunit alpha from Campylobacter jejuni subsp. jejuni serotype O:6 (strain 81116 / NCTC 11828).